The sequence spans 481 residues: FAD-linked oxidoreductase afoF (481 aa).

The first 16 residues, 1 to 16, serve as a signal peptide directing secretion; sequence MRFLLQSITLVAAARA. The 176-residue stretch at 52-227 folds into the FAD-binding PCMH-type domain; sequence SEWRPPTWTG…TAATFKMFDQ (176 aa). N82 is a glycosylation site (N-linked (GlcNAc...) asparagine). A Pros-8alpha-FAD histidine modification is found at H92. Residues N196, N241, N276, N309, N312, and N376 are each glycosylated (N-linked (GlcNAc...) asparagine).

Belongs to the oxygen-dependent FAD-linked oxidoreductase family. FAD is required as a cofactor.

In terms of biological role, FAD-linked oxidoreductase; part of the gene cluster that mediates the biosynthesis of asperfuranone, a probable antitumor agent. The polyketide synthase afoG is responsible for producing the 3,5-dimethyloctadienone moiety from acetyl-CoA, three malonyl-CoA, and two S-adenosyl methionines (SAM). The 3,5-dimethyloctadienone moiety is then loaded onto the SAT domain of afoE and extended with four malonyl-CoA and one SAM, which leads to the formation of 2,4-dihydroxy-6-(5,7-dimethyl-2-oxo-trans-3-trans-5-nonadienyl)-3-methylbenzaldehyde (compound 2) after reductive release and aldol condensation. AfoD is the next enzyme in the biosynthesis sequence and hydroxylates the side chain at the benzylic position of compound 2. After benzylic hydroxylation, a furan ring is formed after five-member ring hemiacetal formation and water elimination. AfoF and afoC are proposed to oxidize the R-diketone proton and to reduce the unconjugated carbonyl group, respectively, to generate asperfuranone. Since no intermediates could be isolated from afoF and afoC deletants, the sequence of these two enzymes is not fully understood. Moreover, since afoC deletant still produces a small amount of asperfuranone, other endogenous oxidoreductases might catalyze the same reaction with much less efficiency. The protein is FAD-linked oxidoreductase afoF of Emericella nidulans (strain FGSC A4 / ATCC 38163 / CBS 112.46 / NRRL 194 / M139) (Aspergillus nidulans).